Consider the following 373-residue polypeptide: Putative F-box/kelch-repeat protein At3g19410 (373 aa).

The region spanning 1 to 46 (MTIPELPKDLIEEILCYVPATYLKRLRSTCKGWNRLFKDDRRFAKK) is the F-box domain. Kelch repeat units follow at residues 101–148 (RIFH…FVLG), 149–200 (YYQE…QCVS), and 329–373 (KLYI…EEKS).

This Arabidopsis thaliana (Mouse-ear cress) protein is Putative F-box/kelch-repeat protein At3g19410.